The following is a 599-amino-acid chain: Elongation factor 4 (599 aa).

In terms of domain architecture, tr-type G spans 5-187; sequence DLIRNFSIVA…AIVTRLPPPK (183 aa). GTP-binding positions include 17–22 and 134–137; these read DHGKST and NKID.

The protein belongs to the TRAFAC class translation factor GTPase superfamily. Classic translation factor GTPase family. LepA subfamily.

It localises to the cell inner membrane. The catalysed reaction is GTP + H2O = GDP + phosphate + H(+). In terms of biological role, required for accurate and efficient protein synthesis under certain stress conditions. May act as a fidelity factor of the translation reaction, by catalyzing a one-codon backward translocation of tRNAs on improperly translocated ribosomes. Back-translocation proceeds from a post-translocation (POST) complex to a pre-translocation (PRE) complex, thus giving elongation factor G a second chance to translocate the tRNAs correctly. Binds to ribosomes in a GTP-dependent manner. This is Elongation factor 4 from Cereibacter sphaeroides (strain ATCC 17025 / ATH 2.4.3) (Rhodobacter sphaeroides).